Consider the following 439-residue polypeptide: MFASETEASASSTQVTTEEPVQQPSVVDRVAGMPLISSTCHMVSAAYTSTKESHPHVKTVCDVAEKGVKTLTAAAVSGAQPILSKLEPQLTSASEYAHRGLDKLEENLPILQQPSEKVLADTKELVSSKVSEAREAVSNTVSSAKDTVASRVTEAVVVTRGAVQSGVDLTKSMVTSSVHSVMGSRVGQMVLSGVDTVLGKSEEWVDNHLPMTDAELAHLATSLEGFDMASVAQQRQDQSYFVRLGSLSERLRQRAYEHSLGKLQHTRQRAQEALLQLSQALSLMETVKQGVDQKLVEGQEKLHQMWLSWNQKRLQGGEEDPAKPEQVESQTFTMFRDVTQQLQTTCASLGASLQGLPAHVKEQALQARRQVEDLQATFSGMHSFQDLSSNVLMQSREQVARAREALDHVVDYVAQNTPVMWLVGPFAPGVVEKAPEEKK.

Residues 1–19 show a composition bias toward low complexity; sequence MFASETEASASSTQVTTEE. The segment at 1–26 is disordered; that stretch reads MFASETEASASSTQVTTEEPVQQPSV. Lysine 66 carries the N6-acetyllysine modification. A Phosphoserine modification is found at serine 92. Residue lysine 123 forms a Glycyl lysine isopeptide (Lys-Gly) (interchain with G-Cter in SUMO1) linkage. Phosphoserine is present on serine 131. Threonine 175 bears the Phosphothreonine mark. Serine 180 and serine 184 each carry phosphoserine. A Phosphothreonine modification is found at threonine 221. Phosphoserine is present on residues serine 222 and serine 246. 2 coiled-coil regions span residues 254-282 and 358-381; these read RAYE…QALS and AHVK…FSGM. At tyrosine 256 the chain carries Phosphotyrosine.

The protein belongs to the perilipin family. As to quaternary structure, homooligomer. Interacts with M6PR (via the cytoplasmic domain). Interacts with IGF2R (via the cytoplasmic domain). In terms of processing, phosphorylation at Tyr-256 by isoform 1 of CHKA (CHKalpha2) promotes dissociation from lipid droplets: dissociation is followed by recruitment of autophagosome machinery to lipid droplets and subsequent lipid droplet lipolysis.

It localises to the lipid droplet. It is found in the endosome membrane. The protein resides in the cytoplasm. Its function is as follows. Structural component of lipid droplets, which is required for the formation and maintenance of lipid storage droplets. Required for the transport of mannose 6-phosphate receptors (MPR) from endosomes to the trans-Golgi network. This chain is Perilipin-3 (PLIN3), found in Sus scrofa (Pig).